The primary structure comprises 446 residues: Iroquois-class homeodomain protein IRX-6 (446 aa).

Residues 146–208 (GAGRRKNATR…NARRRLKKEN (63 aa)) constitute a DNA-binding region (homeobox). Disordered regions lie at residues 208–273 (NKMT…EDEE) and 362–394 (AVEG…RLSV). Residues 217 to 226 (KGGEERKAEG) show a composition bias toward basic and acidic residues. The span at 256 to 273 (LEDLEEEEEEEEEAEDEE) shows a compositional bias: acidic residues.

The protein belongs to the TALE/IRO homeobox family.

It localises to the nucleus. In terms of biological role, transcription factor. Binds to the iroquois binding site (IBS) motif of target genes to regulate gene expression; functions as a transcriptional activator or repressor. Modulates expression of RCVRN, VSX1, BHLHE22/BHLHB5 and TACR3/Nk3r. Required downstream of retinal bipolar cell specification for the terminal differentiation of type 2, type 3a and possibly type 6 bipolar cells. The protein is Iroquois-class homeodomain protein IRX-6 (IRX6) of Homo sapiens (Human).